The chain runs to 525 residues: ATP synthase subunit alpha (525 aa).

Position 171-178 (171-178) interacts with ATP; the sequence is GDRQTGKS.

The protein belongs to the ATPase alpha/beta chains family. As to quaternary structure, F-type ATPases have 2 components, CF(1) - the catalytic core - and CF(0) - the membrane proton channel. CF(1) has five subunits: alpha(3), beta(3), gamma(1), delta(1), epsilon(1). CF(0) has three main subunits: a(1), b(2) and c(9-12). The alpha and beta chains form an alternating ring which encloses part of the gamma chain. CF(1) is attached to CF(0) by a central stalk formed by the gamma and epsilon chains, while a peripheral stalk is formed by the delta and b chains.

It is found in the cell inner membrane. The catalysed reaction is ATP + H2O + 4 H(+)(in) = ADP + phosphate + 5 H(+)(out). In terms of biological role, produces ATP from ADP in the presence of a proton gradient across the membrane. The alpha chain is a regulatory subunit. This chain is ATP synthase subunit alpha, found in Flavobacterium johnsoniae (strain ATCC 17061 / DSM 2064 / JCM 8514 / BCRC 14874 / CCUG 350202 / NBRC 14942 / NCIMB 11054 / UW101) (Cytophaga johnsonae).